The sequence spans 290 residues: NAD kinase (290 aa).

D72 serves as the catalytic Proton acceptor. Residues 72 to 73, 146 to 147, R174, D176, and 187 to 192 each bind NAD(+); these read DG, NE, and TAYALS.

Belongs to the NAD kinase family. A divalent metal cation serves as cofactor.

The protein resides in the cytoplasm. The enzyme catalyses NAD(+) + ATP = ADP + NADP(+) + H(+). Involved in the regulation of the intracellular balance of NAD and NADP, and is a key enzyme in the biosynthesis of NADP. Catalyzes specifically the phosphorylation on 2'-hydroxyl of the adenosine moiety of NAD to yield NADP. This Methylococcus capsulatus (strain ATCC 33009 / NCIMB 11132 / Bath) protein is NAD kinase.